The primary structure comprises 338 residues: D-erythrose-4-phosphate dehydrogenase (338 aa).

An NAD(+)-binding site is contributed by 11-12 (RI). Residues 153–155 (SCT), Arg199, 212–213 (TK), and Arg235 each bind substrate. Residue Cys154 is the Nucleophile of the active site. Asn317 contributes to the NAD(+) binding site.

It belongs to the glyceraldehyde-3-phosphate dehydrogenase family. Epd subfamily. In terms of assembly, homotetramer.

It localises to the cytoplasm. It carries out the reaction D-erythrose 4-phosphate + NAD(+) + H2O = 4-phospho-D-erythronate + NADH + 2 H(+). It functions in the pathway cofactor biosynthesis; pyridoxine 5'-phosphate biosynthesis; pyridoxine 5'-phosphate from D-erythrose 4-phosphate: step 1/5. Functionally, catalyzes the NAD-dependent conversion of D-erythrose 4-phosphate to 4-phosphoerythronate. In Shewanella putrefaciens (strain CN-32 / ATCC BAA-453), this protein is D-erythrose-4-phosphate dehydrogenase.